The following is a 314-amino-acid chain: Olfactory receptor 5P68 (314 aa).

Residues 1 to 28 (MAFLHNGNHTAVTEFILLGLTDDPVFRV) are Extracellular-facing. The N-linked (GlcNAc...) asparagine glycan is linked to Asn-8. A helical transmembrane segment spans residues 29–49 (ILFTIILCIYLVTVSGNLSTI). The Cytoplasmic portion of the chain corresponds to 50-57 (LLIRVSSQ). A helical membrane pass occupies residues 58 to 78 (LHHPMYFFLSHLASVDIGYSS). The Extracellular portion of the chain corresponds to 79–102 (SVTPNMLANFLVEKNTISYLGCTI). Cys-100 and Cys-192 are oxidised to a cystine. Residues 103 to 123 (QLSLAAFCGTVECFLLATMAY) form a helical membrane-spanning segment. Over 124 to 136 (DRFMAICSPLLYS) the chain is Cytoplasmic. Residues 137-157 (TKMSTQVCIQLIVGSYIGGFL) traverse the membrane as a helical segment. The Extracellular portion of the chain corresponds to 158–199 (NASSFTLFFLSFLFCGPNRINHFYCDFAPLVALSCSDVSVSE). The chain crosses the membrane as a helical span at residues 200–220 (VVTSFFSGSVTMITMLVIAIS). The Cytoplasmic portion of the chain corresponds to 221–240 (YTYILITILKMRSTEGRHKA). A helical transmembrane segment spans residues 241-261 (FSTCTSHLTAVTLFYGTITFI). At 262–274 (YVMPKSSFSTDQN) the chain is on the extracellular side. Residues 275-295 (KVVSVFYMVVIPMLNPLIYSL) form a helical membrane-spanning segment. Residues 296–314 (RNNEIKDALKRHLGKKIFS) are Cytoplasmic-facing.

Belongs to the G-protein coupled receptor 1 family.

The protein localises to the cell membrane. Its function is as follows. Potential odorant receptor. This Mus musculus (Mouse) protein is Olfactory receptor 5P68.